The following is a 610-amino-acid chain: Zinc metalloproteinase-disintegrin-like BITM06A (610 aa).

The signal sequence occupies residues 1-20; sequence MIQVLLVTICLAAFPYQGSS. The propeptide occupies 21–189; it reads IILESGNVND…KKASQLVVTA (169 aa). The Peptidase M12B domain occupies 198–394; the sequence is RYVELFIVVD…ENPQCILNEP (197 aa). 2 residues coordinate Ca(2+): Glu201 and Asp285. 3 disulfide bridges follow: Cys309–Cys389, Cys349–Cys373, and Cys351–Cys356. Zn(2+) is bound at residue His334. Glu335 is an active-site residue. Positions 338 and 344 each coordinate Zn(2+). Asn372 carries N-linked (GlcNAc...) asparagine glycosylation. Ca(2+)-binding residues include Cys389, Asn392, Val404, Asn407, Leu409, Glu411, Glu414, and Asp417. The Disintegrin domain occupies 402–488; the sequence is PPVCGNELLE…ECPADVFHKN (87 aa). 14 cysteine pairs are disulfide-bonded: Cys405/Cys434, Cys416/Cys429, Cys418/Cys424, Cys428/Cys451, Cys442/Cys448, Cys447/Cys473, Cys460/Cys480, Cys467/Cys499, Cys492/Cys504, Cys511/Cys561, Cys526/Cys572, Cys539/Cys549, Cys556/Cys598, and Cys592/Cys603. Positions 466 to 468 match the D/ECD-tripeptide motif; sequence ECD. The Ca(2+) site is built by Asp468, Pro469, Glu471, Asp483, and Val484.

The protein belongs to the venom metalloproteinase (M12B) family. P-III subfamily. P-IIIa sub-subfamily. Monomer. Zn(2+) is required as a cofactor. In terms of tissue distribution, expressed by the venom gland.

It is found in the secreted. Functionally, snake venom metalloproteinase that impairs hemostasis in the envenomed animal. The polypeptide is Zinc metalloproteinase-disintegrin-like BITM06A (Bothrops insularis (Golden lancehead)).